A 392-amino-acid chain; its full sequence is Small ribosomal subunit protein bS1 (392 aa).

S1 motif domains follow at residues 16–90 (GDKV…LSKR), 108–173 (DEII…LSRK), 194–262 (GDVI…LSIK), and 279–348 (DDVI…LSIK).

The protein belongs to the bacterial ribosomal protein bS1 family.

Functionally, binds mRNA; thus facilitating recognition of the initiation point. It is needed to translate mRNA with a short Shine-Dalgarno (SD) purine-rich sequence. The polypeptide is Small ribosomal subunit protein bS1 (rpsA) (Staphylococcus haemolyticus (strain JCSC1435)).